A 583-amino-acid chain; its full sequence is Orphan steroid hormone receptor 2 (583 aa).

The nuclear receptor DNA-binding region spans 84 to 159 (IELCAVCGDK…MGMKSDSVQC (76 aa)). NR C4-type zinc fingers lie at residues 87 to 107 (CAVCGDKASGRHYGAISCEGC) and 123 to 142 (CRGNKDCQIIKHNRNRCQYC). Positions 248-563 (TLASVVTSLA…SIIPYILRME (316 aa)) constitute an NR LBD domain.

This sequence belongs to the nuclear hormone receptor family. NR2 subfamily. Binds DNA as a monomer. In terms of tissue distribution, expressed uniformly in the early embryo. In contrast, larval expression is localized to the epaulettes and mouth epithelium. Expressed in multiple adult organs including lantern muscle, tubefeet, intestine, coelomocytes and gonads. In the adult ovaries and testes, expression is specifically localized to the smooth muscle epithelial layer of cells which surround the ovarioles and acini, respectively (at protein level).

Its subcellular location is the cytoplasm. It localises to the nucleus. Its function is as follows. Orphan nuclear receptor. Binds to the hormone response element in the upstream promoter region of the CYIIIB gene in vitro. Both isoform 1 and isoform 2 bind DNA. This chain is Orphan steroid hormone receptor 2, found in Strongylocentrotus purpuratus (Purple sea urchin).